The following is a 619-amino-acid chain: Zinc finger protein 668 (619 aa).

Position 1 is an N-acetylmethionine (methionine 1). Position 10 is a phosphoserine (serine 10). The C2H2-type 1 zinc finger occupies 22 to 44 (YKCLFCTKTFPNAPRAARHAATH). Residues 36-74 (RAARHAATHTPTDCTEEVREAQPKVDTEPKAEEASGDKV) are disordered. Residues 51-71 (EEVREAQPKVDTEPKAEEASG) are compositionally biased toward basic and acidic residues. Residues lysine 59, lysine 65, and lysine 80 each participate in a glycyl lysine isopeptide (Lys-Gly) (interchain with G-Cter in SUMO2) cross-link. 11 C2H2-type zinc fingers span residues 84 to 106 (YACP…GRSH), 112 to 134 (FPCP…LASH), 140 to 162 (FRCT…QRGH), 168 to 190 (YACP…RRTH), 196 to 218 (YSCE…ERSH), 224 to 246 (FLCS…QRIH), 252 to 274 (YRCP…ERTH), 280 to 302 (FLCP…QRAH), 308 to 330 (YRCE…RRVH), 336 to 358 (FKCL…ALVH), and 364 to 386 (FRCE…SRMH). A Glycyl lysine isopeptide (Lys-Gly) (interchain with G-Cter in SUMO2) cross-link involves residue lysine 154. Serine 387 carries the post-translational modification Phosphoserine. The C2H2-type 13 zinc finger occupies 392–414 (FHCNACGKSFVVLSSLRKHERTH). The tract at residues 491–513 (VGEAPSTLGDAGEVGGEETDEKP) is disordered. A Glycyl lysine isopeptide (Lys-Gly) (interchain with G-Cter in SUMO2) cross-link involves residue lysine 512. 3 consecutive C2H2-type zinc fingers follow at residues 516-538 (FVCR…ERSH), 544-566 (FPCT…SRTH), and 572-594 (YSCS…ERTH).

It belongs to the krueppel C2H2-type zinc-finger protein family.

It is found in the nucleus. May be involved in transcriptional regulation. May play a role in DNA repair process. The chain is Zinc finger protein 668 (Znf668) from Mus musculus (Mouse).